The chain runs to 560 residues: Potassium-transporting ATPase potassium-binding subunit (560 aa).

12 helical membrane passes run 6 to 26, 63 to 83, 132 to 152, 175 to 195, 250 to 270, 282 to 302, 327 to 347, 356 to 376, 379 to 399, 416 to 436, 483 to 503, and 524 to 544; these read FLLIASFLLVLMALAKPLGSL, LLAILLFNTLGLVLLFAILMC, GLAVQNFLSAATGIAVAFALI, LWVLMPISLIIALFFIQQGAI, LTNVVQMLAIFLIPAALCFAF, AILWTMTVIFVVCVALVMWAE, FGILASSLFAVVTTAASCGAV, ALGGMIPMWLMQIGEVVFGGV, GLYGMLLFVLLGVFIAGLMIG, MTALAILVTPALVLLGTALAM, LLLAFCMWFGRFLVIIPVMAI, and GALFIGLLTGTVLLVGALTFI.

The protein belongs to the KdpA family. As to quaternary structure, the system is composed of three essential subunits: KdpA, KdpB and KdpC.

The protein localises to the cell inner membrane. Functionally, part of the high-affinity ATP-driven potassium transport (or Kdp) system, which catalyzes the hydrolysis of ATP coupled with the electrogenic transport of potassium into the cytoplasm. This subunit binds the periplasmic potassium ions and delivers the ions to the membrane domain of KdpB through an intramembrane tunnel. This chain is Potassium-transporting ATPase potassium-binding subunit, found in Cronobacter sakazakii (strain ATCC BAA-894) (Enterobacter sakazakii).